A 287-amino-acid polypeptide reads, in one-letter code: Putative syntaxin-4 (287 aa).

Residues methionine 1–isoleucine 262 lie on the Cytoplasmic side of the membrane. The stretch at lysine 65–tyrosine 97 forms a coiled coil. One can recognise a t-SNARE coiled-coil homology domain in the interval phenylalanine 184–alanine 246. The helical; Anchor for type IV membrane protein transmembrane segment at alanine 263 to isoleucine 283 threads the bilayer. At proline 284–lysine 287 the chain is on the extracellular side.

The protein belongs to the syntaxin family.

The protein resides in the membrane. In terms of biological role, potentially involved in docking of synaptic vesicles at presynaptic active zones. The polypeptide is Putative syntaxin-4 (syx-4) (Caenorhabditis elegans).